Consider the following 75-residue polypeptide: Protein EGO2 (75 aa).

This is Protein EGO2 from Saccharomyces cerevisiae (strain ATCC 204508 / S288c) (Baker's yeast).